Here is a 301-residue protein sequence, read N- to C-terminus: uncharacterized protein (301 aa).

Disordered regions lie at residues 56–126 (ESPT…ESDL) and 149–173 (LSTE…DASS). Residues 71–82 (VQKENQKPKDLN) are compositionally biased toward basic and acidic residues. A compositionally biased stretch (polar residues) spans 93–102 (KNSSGLVSQI). Residues 161–173 (SNTSSSSMSDASS) are compositionally biased toward low complexity.

This is an uncharacterized protein from Caenorhabditis elegans.